The primary structure comprises 385 residues: tRNA-specific 2-thiouridylase MnmA (385 aa).

Residues 27 to 34 (AMSGGVDS) and L53 each bind ATP. The Nucleophile role is filled by C121. Residues C121 and C217 are joined by a disulfide bond. G145 is a binding site for ATP. Positions 167 to 169 (KDQ) are interaction with tRNA. C217 acts as the Cysteine persulfide intermediate in catalysis.

This sequence belongs to the MnmA/TRMU family.

Its subcellular location is the cytoplasm. It carries out the reaction S-sulfanyl-L-cysteinyl-[protein] + uridine(34) in tRNA + AH2 + ATP = 2-thiouridine(34) in tRNA + L-cysteinyl-[protein] + A + AMP + diphosphate + H(+). In terms of biological role, catalyzes the 2-thiolation of uridine at the wobble position (U34) of tRNA, leading to the formation of s(2)U34. In Sorangium cellulosum (strain So ce56) (Polyangium cellulosum (strain So ce56)), this protein is tRNA-specific 2-thiouridylase MnmA.